Here is a 580-residue protein sequence, read N- to C-terminus: MAVRQALGRGLQLGRALLLRFAPKPGPVSGWGKPGPGAAWGRGERPGRVSSPGAQPRPLGLPLPDRYRFFRQSVAGLAARIQRQFVVRARGGAGPCGRAVFLAFGLGLGLIEEKQAESRRAASACQEIQAIFTQKNKQVSDPLDTRRWQGFRLEDYLIGQAIGKGCNAAVYEATMPTLPQHLEKAKHLGLLGKGPDVVSKGADGEQAPGAPAFPFAIKMMWNISAGSSSEAILSKMSQELVPASRMALDGEYGAVTYRRSRDGPKQLAPHPNIIRVFRAFTSSVPLLPGALADYPDMLPPHYYPEGLGHGRTLFLVMKNYPCTLRQYLEEQTPSSRLATMMTLQLLEGVDHLVQQGIAHRDLKSDNILVEWDSDGCPWLVISDFGCCLADERVGLQLPFNSSSVERGGNGSLMAPEVSTAHSGPHAVIDYSKADTWAVGAIAYEIFGLANPFYGQGSAHLESRSYQEAQLPEMPKSVPPETRQLVRSLLQREANKRPSARIAANVLHLSLWGEHLLALKNLKLDKMIAWLLQQSAATLLADRLREKSCVETKLQMLFLANLECEALCQAALLLSSWRAAP.

A mitochondrion-targeting transit peptide spans 1-77; it reads MAVRQALGRG…RFFRQSVAGL (77 aa). The segment at 28 to 60 is disordered; it reads VSGWGKPGPGAAWGRGERPGRVSSPGAQPRPLG. The helical transmembrane segment at 94–110 threads the bilayer; sequence GPCGRAVFLAFGLGLGL. The tract at residues 111-117 is required for outer membrane localization; it reads IEEKQAE. The 355-residue stretch at 156-510 folds into the Protein kinase domain; it reads YLIGQAIGKG…IAANVLHLSL (355 aa). Residues 162 to 170 and K218 each bind ATP; that span reads IGKGCNAAV. The residue at position 227 (S227) is a Phosphoserine; by autocatalysis. The active-site Proton acceptor is the D361. A Phosphoserine; by autocatalysis modification is found at S401.

This sequence belongs to the protein kinase superfamily. Ser/Thr protein kinase family. As to quaternary structure, upon mitochondrial depolarization, it forms a supercomplex with TOM and TIM23 complexes. PINK1-TOM-TIM23 supercomplex formation requires PINK1 interaction with TOMM20 and TOMM70 and is critical for PINK1 stabilization at the outer mitochondrial membrane, kinase activation and downstream mitophagy. Upon mitochondrial depolarization, interacts with TIMM23; the interaction is required for PINK1 accumulation at the outer mitochondrial membrane, kinase activation by autophosphorylation and PRKN recruitement to mitochondria. Interacts with PRKN. Interacts with FBXO7. Forms a complex with PRKN and PARK7. Interacts with NENF. Requires Mg(2+) as cofactor. Post-translationally, proteolytically cleaved. In healthy cells, the precursor is continuously imported into the inner mitochondrial membrane (IMM), where it is proteolytically cleaved by mitochondrial-processing peptidase (MPP) and then undergoes further proteolytic cleavage by PARL or AFG3L2 to give rise to the 52 kDa short form. The 52 kDa short form is then released into the cytosol where it rapidly undergoes proteasome-dependent degradation. In unhealthy cells, when cellular stress conditions lead to the loss of mitochondrial membrane potential, mitochondrial import is impaired leading to the precursor accumulating on the outer mitochondrial membrane (OMM). If accumulation at the OMM fails and it is imported into the depolarized mitochondria, it undergoes cleavage by the IMM protease OMA1, promoting its subsequent degradation by the proteasome. In terms of processing, autophosphorylated. Loss of mitochondrial membrane potential results in the precursor accumulating on the outer mitochondrial membrane (OMM) where it is activated by autophosphorylation. Autophosphorylation at Ser-227 and Ser-401 is sufficient and essential for selective recruitment of PRKN to depolarized mitochondria, via PINK1-dependent phosphorylation of ubiquitin and maybe PRKN.

The protein localises to the mitochondrion outer membrane. It is found in the mitochondrion inner membrane. The protein resides in the cytoplasm. It localises to the cytosol. The enzyme catalyses L-seryl-[protein] + ATP = O-phospho-L-seryl-[protein] + ADP + H(+). It catalyses the reaction L-threonyl-[protein] + ATP = O-phospho-L-threonyl-[protein] + ADP + H(+). Its function is as follows. Serine/threonine-protein kinase which acts as a sensor of mitochondrial damage and protects against mitochondrial dysfunction during cellular stress. It phosphorylates mitochondrial proteins to coordinate mitochondrial quality control mechanisms that remove and replace dysfunctional mitochondrial components. Depending on the severity of mitochondrial damage, activity ranges from preventing apoptosis and stimulating mitochondrial biogenesis to eliminating severely damaged mitochondria via PINK1-PRKN-dependent mitophagy. When cellular stress results in irreversible mitochondrial damage, PINK1 accumulates at the outer mitochondrial membrane (OMM) where it phosphorylates pre-existing polyubiquitin chains at 'Ser-65', recruits PRKN from the cytosol to the OMM and activates PRKN by phosphorylation at 'Ser-65'; activated PRKN then ubiquinates VDAC1 and other OMM proteins to initiate mitophagy. The PINK1-PRKN pathway also promotes fission of damaged mitochondria through phosphorylation and PRKN-dependent degradation of mitochondrial proteins involved in fission such as MFN2. This prevents the refusion of unhealthy mitochondria with the mitochondrial network or initiates mitochondrial fragmentation facilitating their later engulfment by autophagosomes. Also promotes mitochondrial fission independently of PRKN and ATG7-mediated mitophagy, via the phosphorylation and activation of DNM1L. Regulates motility of damaged mitochondria by promoting the ubiquitination and subsequent degradation of MIRO1 and MIRO2; in motor neurons, this likely inhibits mitochondrial intracellular anterograde transport along the axons which probably increases the chance of the mitochondria undergoing mitophagy in the soma. Required for ubiquinone reduction by mitochondrial complex I by mediating phosphorylation of complex I subunit NDUFA10. Phosphorylates LETM1, positively regulating its mitochondrial calcium transport activity. This Rattus norvegicus (Rat) protein is Serine/threonine-protein kinase PINK1, mitochondrial.